The primary structure comprises 283 residues: MGSEKEQRPEAHLPEEGEGAKPWRVDGSKDSQITPREDHGQESLLAGLHGTHPPKTRQKVTAQAGGPGDPMLFSSPETDEKLFICAQCGKTFNNTSNLRTHQRIHTGEKPYKCSECGKSFSRSSNRIRHERIHLEEKHYQCAKCQESFRRRSDLTTHQQDHLGQRPYRCDICGKSFTQSSTLAVHHRTHLEPAPYICCECGKSFSNSSSFGVHHRTHTGERPYECTECGRTFSDISNFGAHQRTHRGEKPYRCTLCGKHFSRSSNLIRHQKTHLGEQDEKDFS.

Over residues 1 to 41 (MGSEKEQRPEAHLPEEGEGAKPWRVDGSKDSQITPREDHGQ) the composition is skewed to basic and acidic residues. The disordered stretch occupies residues 1–68 (MGSEKEQRPE…KVTAQAGGPG (68 aa)). Ser-43 is modified (phosphoserine). Residue Lys-81 forms a Glycyl lysine isopeptide (Lys-Gly) (interchain with G-Cter in SUMO2) linkage. C2H2-type zinc fingers lie at residues 83 to 105 (FICA…QRIH), 111 to 133 (YKCS…ERIH), 139 to 161 (YQCA…QQDH), 167 to 189 (YRCD…HRTH), 195 to 217 (YICC…HRTH), 223 to 245 (YECT…QRTH), and 251 to 273 (YRCT…QKTH).

It belongs to the krueppel C2H2-type zinc-finger protein family.

The protein resides in the nucleus. Its function is as follows. May be involved in transcriptional regulation. The chain is Zinc finger protein 691 (Znf691) from Mus musculus (Mouse).